The sequence spans 101 residues: MVKHSRGYRTRSRSLLRKSPRERGAVPSLSRLMVEYKEGDKVVIKINPSVHSGMPHRRYQGKVGKIIGKRGRAYLVSVTLGDKQKVIIVRPEHLVSFSSSG.

Positions 1 to 18 (MVKHSRGYRTRSRSLLRK) are enriched in basic residues. Residues 1–23 (MVKHSRGYRTRSRSLLRKSPRER) form a disordered region.

This sequence belongs to the eukaryotic ribosomal protein eL21 family.

This chain is Large ribosomal subunit protein eL21, found in Saccharolobus islandicus (strain Y.G.57.14 / Yellowstone #1) (Sulfolobus islandicus).